A 277-amino-acid polypeptide reads, in one-letter code: 3-methyl-2-oxobutanoate hydroxymethyltransferase (277 aa).

The Mg(2+) site is built by D43 and D82. 3-methyl-2-oxobutanoate-binding positions include 43–44, D82, and K112; that span reads DS. E114 provides a ligand contact to Mg(2+). E181 functions as the Proton acceptor in the catalytic mechanism.

Belongs to the PanB family. As to quaternary structure, homodecamer; pentamer of dimers. Mg(2+) is required as a cofactor.

The protein localises to the cytoplasm. It catalyses the reaction 3-methyl-2-oxobutanoate + (6R)-5,10-methylene-5,6,7,8-tetrahydrofolate + H2O = 2-dehydropantoate + (6S)-5,6,7,8-tetrahydrofolate. It participates in cofactor biosynthesis; (R)-pantothenate biosynthesis; (R)-pantoate from 3-methyl-2-oxobutanoate: step 1/2. Catalyzes the reversible reaction in which hydroxymethyl group from 5,10-methylenetetrahydrofolate is transferred onto alpha-ketoisovalerate to form ketopantoate. This chain is 3-methyl-2-oxobutanoate hydroxymethyltransferase, found in Listeria monocytogenes serovar 1/2a (strain ATCC BAA-679 / EGD-e).